Here is a 144-residue protein sequence, read N- to C-terminus: Deoxyuridine 5'-triphosphate nucleotidohydrolase (144 aa).

DUMP-binding residues include S66, R133, F138, and G139.

Belongs to the dUTPase family. In terms of assembly, homotrimer. Requires Mg(2+) as cofactor.

The enzyme catalyses dUTP + H2O = dUMP + diphosphate + H(+). Its pathway is pyrimidine metabolism; dUMP biosynthesis; dUMP from dCTP (dUTP route): step 2/2. Involved in nucleotide metabolism via production of dUMP, the immediate precursor of thymidine nucleotides, and decreases the intracellular concentration of dUTP so that uracil cannot be incorporated into DNA. This Encephalitozoon cuniculi (strain GB-M1) (Microsporidian parasite) protein is Deoxyuridine 5'-triphosphate nucleotidohydrolase (DUT1).